The chain runs to 201 residues: Proteasome subunit beta 1 (201 aa).

The propeptide at 1–10 (MNGSPSAMKG) is removed in mature form; by autocatalysis. The active-site Nucleophile is Thr-11.

The protein belongs to the peptidase T1B family. As to quaternary structure, the 20S proteasome core is composed of 14 alpha and 14 beta subunits that assemble into four stacked heptameric rings, resulting in a barrel-shaped structure. The two inner rings, each composed of seven catalytic beta subunits, are sandwiched by two outer rings, each composed of seven alpha subunits. The catalytic chamber with the active sites is on the inside of the barrel. Has a gated structure, the ends of the cylinder being occluded by the N-termini of the alpha-subunits. Is capped at one or both ends by the proteasome regulatory ATPase, PAN.

It localises to the cytoplasm. The enzyme catalyses Cleavage of peptide bonds with very broad specificity.. With respect to regulation, the formation of the proteasomal ATPase PAN-20S proteasome complex, via the docking of the C-termini of PAN into the intersubunit pockets in the alpha-rings, triggers opening of the gate for substrate entry. Interconversion between the open-gate and close-gate conformations leads to a dynamic regulation of the 20S proteasome proteolysis activity. Functionally, component of the proteasome core, a large protease complex with broad specificity involved in protein degradation. This chain is Proteasome subunit beta 1, found in Thermococcus gammatolerans (strain DSM 15229 / JCM 11827 / EJ3).